The sequence spans 512 residues: mRNA export factor (512 aa).

The interval 1–242 is disordered; the sequence is MATDIDMLID…PVPERKAPSA (242 aa). The Nuclear export signal signature appears at 5–17; that stretch reads IDMLIDLGLDLSD. S16 and S18 each carry phosphoserine; by host. Composition is skewed to acidic residues over residues 16-28 and 36-55; these read SDSELEEDALERD and PESDSSGECSSSDEDMEDPC. An interaction with host ALYREF region spans residues 104 to 112; it reads VWSRLGTRR. A Nuclear localization signal motif is present at residues 110–138; that stretch reads TRRSASPREPHGGKVARIQPPSTKAPHPR. At S113 the chain carries Phosphoserine; by host. Residues 135 to 149 are compositionally biased toward basic residues; that stretch reads PHPRGGRRGRRRGRG. R138 carries the dimethylated arginine; by host modification. The interval 138–152 is RGG-box; that stretch reads RGGRRGRRRGRGRYG. At R148 the chain carries Omega-N-methylarginine; by host. R150 carries the post-translational modification Dimethylated arginine; by host. The segment covering 228 to 240 has biased composition (basic and acidic residues); sequence ADGRAPVPERKAP. Residues C400, H479, C483, and C488 each coordinate Zn(2+). The segment at 400 to 488 adopts a CHC2-type zinc-finger fold; the sequence is CYLKARGLCG…HRQECSSRVC (89 aa).

The protein belongs to the HHV-1 ICP27 protein family. As to quaternary structure, interacts with host RBP1; this interaction facilitates the RNA polymerase recruitment to viral transcription sites. Interacts (via the RGG box) with host ALYREF/THOC4; this interaction recruits ALYREF to viral replication compartments and probably directs viral mRNA to the TAP/NFX1 pathway. Interacts (via the RGG box) with host SRPK1; this interaction relocalizes SRPK1 to the nucleus and seems to alter its activity. Interacts with ICP4; this interaction modulates ICP4 DNA-binding activity. Interacts with host NXF1; this interaction allows efficient export of HSV-1 early and late transcripts. Interacts with host IRF3; this interaction inhibits IRF3 phosphorylation and nuclear translocation. Methylated within the RGG box possibly by host PRMT1. When hypomethylated, ICP27 is exported to the cytoplasm earlier and more rapidly. In terms of processing, phosphorylated.

The protein localises to the host cytoplasm. It localises to the host nucleus. Multifunctional regulator of the expression of viral genes that contributes to the shutoff of host protein synthesis and mediates nuclear export of viral intronless mRNAs. Also stimulates translation of viral transcripts. Independently, plays a role in the regulation of virion release. Also plays a role in the inhibition of host innate immune response by targeting host IRF3 and thereby preventing production of beta-interferon. Silences the 3' splice site of the host promyelocytic leukemia (PML) intron 7a, thereby switching PML isoforms from PML-II to PML-V. This could be linked to the accelerated mRNA export induced by ICP27 which might not provide sufficient time for PML pre-mRNA to be spliced in the nucleus. Also suppresses splicing of the viral ICP34.5 mRNA, allowing the virus to express a variant form of ICP34.5. The protein is mRNA export factor of Human herpesvirus 2 (strain HG52) (HHV-2).